The following is a 976-amino-acid chain: Vacuolar membrane protease (976 aa).

Over 1-15 (MKLKSVFRSVLKYRK) the chain is Cytoplasmic. A helical membrane pass occupies residues 16–36 (TNLSLLLLITYSIITLLYIFD). The Vacuolar segment spans residues 37-359 (HERYKLNLPK…KFFVISAKTL (323 aa)). N-linked (GlcNAc...) asparagine glycosylation is found at N96 and N121. Zn(2+)-binding residues include H156 and D168. A glycan (N-linked (GlcNAc...) asparagine) is linked at N189. E200 functions as the Proton acceptor in the catalytic mechanism. E201 serves as a coordination point for Zn(2+). N-linked (GlcNAc...) asparagine glycans are attached at residues N212 and N217. The Zn(2+) site is built by E226 and H300. The chain crosses the membrane as a helical span at residues 360–380 (FYWNCIFLLVSPVVAIGLYLI). Over 381 to 392 (SRDRMTWKSHSW) the chain is Cytoplasmic. The chain crosses the membrane as a helical span at residues 393-412 (LSWTRFPLSLAAGIIVQKLF). At 413-428 (SNDIIRSNPLTFSRNY) the chain is on the vacuolar side. A helical transmembrane segment spans residues 429–449 (FWPISAFFTQVIFTSYVLINC). Residues 450–461 (SNFFFPCADMKS) lie on the Cytoplasmic side of the membrane. A helical transmembrane segment spans residues 462-482 (LSIIELFIILWTILLFTSKLL). Residues 483-496 (YSSDYRYTGLYPLS) are Vacuolar-facing. The helical transmembrane segment at 497–517 (IFFLLSTIAAILRLLALALGM) threads the bilayer. The Cytoplasmic portion of the chain corresponds to 518-627 (RTRKRLGREC…NSLKLEYTDY (110 aa)). The tract at residues 528 to 610 (RDHHSNYSSH…PLLKGSNSME (83 aa)) is disordered. The span at 549–558 (NLEQPQDQFT) shows a compositional bias: polar residues. Over residues 559 to 570 (SSQDDQASIQDD) the composition is skewed to low complexity. Residues 582 to 601 (NVDEDHGMDSSSQQHDERVP) are compositionally biased toward basic and acidic residues. Residues 628 to 648 (AWIIQFLLIVPIPSFILFNSV) traverse the membrane as a helical segment. The Vacuolar segment spans residues 649 to 668 (DVIMDALNHTVQEGSKATFD). A glycan (N-linked (GlcNAc...) asparagine) is linked at N656. A helical transmembrane segment spans residues 669–689 (VLRFGMVGSILIALPILPFFY). At 690 to 692 (KVN) the chain is on the cytoplasmic side. The helical transmembrane segment at 693 to 713 (YITISLTALLFLISASKTLLV) threads the bilayer. Residues 714 to 976 (HPFTNSNPLK…LVIVKDAIIL (263 aa)) are Vacuolar-facing. N768, N796, N811, N866, and N937 each carry an N-linked (GlcNAc...) asparagine glycan.

Belongs to the peptidase M28 family. Requires Zn(2+) as cofactor.

It is found in the vacuole membrane. Functionally, may be involved in vacuolar sorting and osmoregulation. The sequence is that of Vacuolar membrane protease from Saccharomyces cerevisiae (strain JAY291) (Baker's yeast).